Here is a 362-residue protein sequence, read N- to C-terminus: UDP-N-acetylglucosamine--N-acetylmuramyl-(pentapeptide) pyrophosphoryl-undecaprenol N-acetylglucosamine transferase (362 aa).

Residues 15 to 17, N127, R165, S191, I247, 266 to 271, and Q292 each bind UDP-N-acetyl-alpha-D-glucosamine; these read TGG and ALTVSE.

Belongs to the glycosyltransferase 28 family. MurG subfamily.

Its subcellular location is the cell inner membrane. The catalysed reaction is di-trans,octa-cis-undecaprenyl diphospho-N-acetyl-alpha-D-muramoyl-L-alanyl-D-glutamyl-meso-2,6-diaminopimeloyl-D-alanyl-D-alanine + UDP-N-acetyl-alpha-D-glucosamine = di-trans,octa-cis-undecaprenyl diphospho-[N-acetyl-alpha-D-glucosaminyl-(1-&gt;4)]-N-acetyl-alpha-D-muramoyl-L-alanyl-D-glutamyl-meso-2,6-diaminopimeloyl-D-alanyl-D-alanine + UDP + H(+). Its pathway is cell wall biogenesis; peptidoglycan biosynthesis. Its function is as follows. Cell wall formation. Catalyzes the transfer of a GlcNAc subunit on undecaprenyl-pyrophosphoryl-MurNAc-pentapeptide (lipid intermediate I) to form undecaprenyl-pyrophosphoryl-MurNAc-(pentapeptide)GlcNAc (lipid intermediate II). The polypeptide is UDP-N-acetylglucosamine--N-acetylmuramyl-(pentapeptide) pyrophosphoryl-undecaprenol N-acetylglucosamine transferase (Shewanella baltica (strain OS185)).